The chain runs to 105 residues: Large ribosomal subunit protein bL34m (105 aa).

The N-terminal 16 residues, 1–16, are a transit peptide targeting the mitochondrion; sequence MPLFARLCQPQSRRMF.

This sequence belongs to the bacterial ribosomal protein bL34 family. As to quaternary structure, component of the mitochondrial large ribosomal subunit (mt-LSU). Mature yeast 74S mitochondrial ribosomes consist of a small (37S) and a large (54S) subunit. The 37S small subunit contains a 15S ribosomal RNA (15S mt-rRNA) and 34 different proteins. The 54S large subunit contains a 21S rRNA (21S mt-rRNA) and 46 different proteins.

The protein localises to the mitochondrion. Functionally, component of the mitochondrial ribosome (mitoribosome), a dedicated translation machinery responsible for the synthesis of mitochondrial genome-encoded proteins, including at least some of the essential transmembrane subunits of the mitochondrial respiratory chain. The mitoribosomes are attached to the mitochondrial inner membrane and translation products are cotranslationally integrated into the membrane. The sequence is that of Large ribosomal subunit protein bL34m from Saccharomyces cerevisiae (strain ATCC 204508 / S288c) (Baker's yeast).